Here is a 485-residue protein sequence, read N- to C-terminus: Adenosylhomocysteinase 2 (485 aa).

Positions 64, 139, and 205 each coordinate substrate. 206-208 (TTT) lines the NAD(+) pocket. 2 residues coordinate substrate: Lys235 and Asp239. NAD(+) is bound by residues Asn240, 269-274 (GYGDVG), Glu292, Asn327, 348-350 (IGH), and Asn397.

Belongs to the adenosylhomocysteinase family. Requires NAD(+) as cofactor.

It carries out the reaction S-adenosyl-L-homocysteine + H2O = L-homocysteine + adenosine. Its pathway is amino-acid biosynthesis; L-homocysteine biosynthesis; L-homocysteine from S-adenosyl-L-homocysteine: step 1/1. Its function is as follows. Adenosylhomocysteine is a competitive inhibitor of S-adenosyl-L-methionine-dependent methyl transferase reactions; therefore adenosylhomocysteinase may play a key role in the control of methylations via regulation of the intracellular concentration of adenosylhomocysteine. In Arabidopsis thaliana (Mouse-ear cress), this protein is Adenosylhomocysteinase 2 (SAHH2).